We begin with the raw amino-acid sequence, 534 residues long: Lariat debranching enzyme A (534 aa).

The a divalent metal cation site is built by cysteine 8, histidine 10, aspartate 39, and asparagine 84. Residues 124–154 (SGIFKSHDYRKGHFERPPYSKDTVRSAYHVR) form a lariat recognition loop region. Residues histidine 174, histidine 226, and histidine 228 each contribute to the a divalent metal cation site. Disordered stretches follow at residues 386 to 439 (EEEK…QEDE) and 469 to 534 (SMAV…DEDE). Over residues 388–400 (EKEDFDMTEDNEA) the composition is skewed to acidic residues. Residues 413 to 424 (STDTSILSTSVN) show a composition bias toward polar residues. The segment covering 428 to 439 (ITLEDDDEQEDE) has biased composition (acidic residues). Basic and acidic residues predominate over residues 484–499 (ELDRSESSQTEGEGKQ).

This sequence belongs to the lariat debranching enzyme family. Fe(2+) serves as cofactor. The cofactor is Zn(2+). Requires Mn(2+) as cofactor.

The protein resides in the nucleus. With respect to regulation, active in presence of diverse metals including Fe(2+), Zn(2+), Mn(2+). Also activated by Ca(2+). Binds two metal cations in two adjacent alpha and beta metal-binding pockets. Functionally, cleaves the 2'-5' phosphodiester linkage at the branch point of excised lariat intron RNA and converts them into linear molecules that can be subsequently degraded, thereby facilitating ribonucleotide turnover. Linked to its role in pre-mRNA processing mechanism, may also participate in retrovirus replication and have an antiviral cell-intrinsic defense function. The chain is Lariat debranching enzyme A (dbr1-a) from Xenopus laevis (African clawed frog).